Reading from the N-terminus, the 498-residue chain is Ribose import ATP-binding protein RbsA 1 (498 aa).

2 ABC transporter domains span residues 7–243 (LHIQ…VGRR) and 254–496 (PRGE…IGKS). 39–46 (GENGAGKS) lines the ATP pocket.

Belongs to the ABC transporter superfamily. Ribose importer (TC 3.A.1.2.1) family. In terms of assembly, the complex is composed of an ATP-binding protein (RbsA), two transmembrane proteins (RbsC) and a solute-binding protein (RbsB).

It is found in the cell inner membrane. The enzyme catalyses D-ribose(out) + ATP + H2O = D-ribose(in) + ADP + phosphate + H(+). Its function is as follows. Part of the ABC transporter complex RbsABC involved in ribose import. Responsible for energy coupling to the transport system. In Pasteurella multocida (strain Pm70), this protein is Ribose import ATP-binding protein RbsA 1.